The chain runs to 439 residues: Ribosomal protein uS12 methylthiotransferase RimO (439 aa).

One can recognise an MTTase N-terminal domain in the interval 3–113 (HKVGFVSLGC…VVNAVHQHLP (111 aa)). [4Fe-4S] cluster-binding residues include Cys-12, Cys-48, Cys-77, Cys-144, Cys-148, and Cys-151. In terms of domain architecture, Radical SAM core spans 130–367 (LTPRHYAYLK…MQVQAEISRN (238 aa)). One can recognise a TRAM domain in the interval 370–436 (KNKIGSTQTV…DYDLYGDLEY (67 aa)).

Belongs to the methylthiotransferase family. RimO subfamily. [4Fe-4S] cluster serves as cofactor.

Its subcellular location is the cytoplasm. It carries out the reaction L-aspartate(89)-[ribosomal protein uS12]-hydrogen + (sulfur carrier)-SH + AH2 + 2 S-adenosyl-L-methionine = 3-methylsulfanyl-L-aspartate(89)-[ribosomal protein uS12]-hydrogen + (sulfur carrier)-H + 5'-deoxyadenosine + L-methionine + A + S-adenosyl-L-homocysteine + 2 H(+). Its function is as follows. Catalyzes the methylthiolation of an aspartic acid residue of ribosomal protein uS12. This Legionella pneumophila (strain Corby) protein is Ribosomal protein uS12 methylthiotransferase RimO.